The primary structure comprises 477 residues: M-phase inducer phosphatase 3 (477 aa).

Positions 1-20 are disordered; sequence MSAEFFSSKREEGSLASGPS. N-acetylserine is present on Ser2. 2 positions are modified to phosphoserine: Ser20 and Ser38. The residue at position 48 (Thr48) is a Phosphothreonine; by CDK1. A phosphoserine mark is found at Ser58, Ser62, and Ser65. Thr68 carries the phosphothreonine; by CDK1 modification. At Ser123 the chain carries Phosphoserine; by CDK1. Ser130 bears the Phosphoserine mark. Position 131 is a phosphothreonine (Thr131). The residue at position 169 (Ser169) is a Phosphoserine; by CDK1. 2 positions are modified to phosphoserine; by PLK3: Ser192 and Ser199. At Ser218 the chain carries Phosphoserine; by CDK1. Ser220 carries the phosphoserine; by CHEK1, CHEK2, BRSK1, MAPK14 AND MARK3 modification. The Rhodanese domain occupies 325 to 432; sequence LIEKFYIIDC…FFPEYMELCE (108 aa). Cys381 is an active-site residue. Ser476 is subject to Phosphoserine.

It belongs to the MPI phosphatase family. In terms of assembly, interacts with MAPK14 and 14-3-3 proteins. When phosphorylated on Ser-130 and/or Thr-131, interacts with PLK1. Interacts with MARK3/C-TAK1. In terms of processing, phosphorylated by CHEK1 and MAPK14 at Ser-220. This phosphorylation creates a binding site for 14-3-3 protein and inhibits the phosphatase. Phosphorylated by PLK4. Phosphorylated by PLK1, leading to activate the phosphatase activity. Phosphorylation by PLK3 at Ser-192 promotes nuclear translocation. Ser-199 is a minor phosphorylation site. Phosphorylation by CDK1 occurs at G2 and G2-M transition and leads to increased activity.

The protein resides in the nucleus. The catalysed reaction is O-phospho-L-tyrosyl-[protein] + H2O = L-tyrosyl-[protein] + phosphate. In terms of biological role, functions as a dosage-dependent inducer in mitotic control. Tyrosine protein phosphatase required for progression of the cell cycle. When phosphorylated, highly effective in activating G2 cells into prophase. Directly dephosphorylates CDK1 and activates its kinase activity. The polypeptide is M-phase inducer phosphatase 3 (CDC25C) (Bos taurus (Bovine)).